The primary structure comprises 188 residues: Trafficking protein particle complex subunit 5 (188 aa).

Belongs to the TRAPP small subunits family. BET3 subfamily. As to quaternary structure, part of the multisubunit TRAPP (transport protein particle) complex.

It is found in the golgi apparatus. The protein localises to the cis-Golgi network. It localises to the endoplasmic reticulum. Functionally, may play a role in vesicular transport from endoplasmic reticulum to Golgi. The chain is Trafficking protein particle complex subunit 5 (TRAPPC5) from Gallus gallus (Chicken).